The following is a 424-amino-acid chain: UPF0761 membrane protein Smlt0865 (424 aa).

6 consecutive transmembrane segments (helical) span residues 48–68 (VFAL…FPVF), 101–121 (SAGQ…LITL), 144–164 (FLVY…SLAV), 181–201 (WLAE…CITL), 216–236 (AVPG…GIGA), and 251–271 (VAFV…VLLG).

The protein belongs to the UPF0761 family.

The protein localises to the cell inner membrane. The polypeptide is UPF0761 membrane protein Smlt0865 (Stenotrophomonas maltophilia (strain K279a)).